We begin with the raw amino-acid sequence, 444 residues long: Aspartate--tRNA(Asp/Asn) ligase (444 aa).

Glu-176 contributes to the L-aspartate binding site. Residues 198-201 (QLFK) are aspartate. An L-aspartate-binding site is contributed by Arg-220. ATP is bound by residues 220 to 222 (RAE), 228 to 230 (RHL), and Glu-367. 2 residues coordinate Mg(2+): Glu-367 and Ser-370. Ser-370 and Arg-374 together coordinate L-aspartate. Position 415 to 418 (415 to 418 (GCER)) interacts with ATP.

It belongs to the class-II aminoacyl-tRNA synthetase family. Type 2 subfamily. As to quaternary structure, homodimer. Mg(2+) serves as cofactor.

Its subcellular location is the cytoplasm. The enzyme catalyses tRNA(Asx) + L-aspartate + ATP = L-aspartyl-tRNA(Asx) + AMP + diphosphate. In terms of biological role, aspartyl-tRNA synthetase with relaxed tRNA specificity since it is able to aspartylate not only its cognate tRNA(Asp) but also tRNA(Asn). Reaction proceeds in two steps: L-aspartate is first activated by ATP to form Asp-AMP and then transferred to the acceptor end of tRNA(Asp/Asn). This chain is Aspartate--tRNA(Asp/Asn) ligase, found in Methanosarcina barkeri (strain Fusaro / DSM 804).